A 217-amino-acid chain; its full sequence is Phosphoenolpyruvate guanylyltransferase (217 aa).

Residues Thr150, Gly165, and Ser168 each contribute to the phosphoenolpyruvate site.

Belongs to the CofC family.

It carries out the reaction phosphoenolpyruvate + GTP + H(+) = enolpyruvoyl-2-diphospho-5'-guanosine + diphosphate. It functions in the pathway cofactor biosynthesis; coenzyme F420 biosynthesis. In terms of biological role, guanylyltransferase that catalyzes the activation of phosphoenolpyruvate (PEP) as enolpyruvoyl-2-diphospho-5'-guanosine, via the condensation of PEP with GTP. It is involved in the biosynthesis of coenzyme F420, a hydride carrier cofactor. This Mycobacterium ulcerans (strain Agy99) protein is Phosphoenolpyruvate guanylyltransferase.